The sequence spans 162 residues: Phosphopantetheine adenylyltransferase (162 aa).

Residue Thr10 coordinates substrate. ATP-binding positions include Thr10–Phe11 and His18. Positions 42, 74, and 88 each coordinate substrate. Residues Gly89–Arg91, Glu99, and Phe124–Thr130 contribute to the ATP site.

The protein belongs to the bacterial CoaD family. In terms of assembly, homohexamer. Mg(2+) serves as cofactor.

The protein localises to the cytoplasm. The catalysed reaction is (R)-4'-phosphopantetheine + ATP + H(+) = 3'-dephospho-CoA + diphosphate. It functions in the pathway cofactor biosynthesis; coenzyme A biosynthesis; CoA from (R)-pantothenate: step 4/5. Its function is as follows. Reversibly transfers an adenylyl group from ATP to 4'-phosphopantetheine, yielding dephospho-CoA (dPCoA) and pyrophosphate. The polypeptide is Phosphopantetheine adenylyltransferase (Francisella tularensis subsp. mediasiatica (strain FSC147)).